Consider the following 106-residue polypeptide: NADH dehydrogenase [ubiquinone] iron-sulfur protein 5 (106 aa).

Positions 30 to 74 (PSRCHAFEKEWIECAHGIGSIRAEKECKIEFEDFRECLLRQKTMK) constitute a CHCH domain. 2 consecutive short sequence motifs (cx9C motif) follow at residues 33 to 43 (CHAFEKEWIEC) and 56 to 66 (CKIEFEDFREC). 2 disulfides stabilise this stretch: Cys33/Cys66 and Cys43/Cys56. Residues 84–106 (EKLIKEGKYTPPPHHSGQEEPRS) are disordered.

The protein belongs to the complex I NDUFS5 subunit family. As to quaternary structure, mammalian complex I is composed of 45 different subunits. This is a component of the iron-sulfur (IP) fragment of the enzyme.

The protein localises to the mitochondrion inner membrane. It is found in the mitochondrion intermembrane space. Functionally, accessory subunit of the mitochondrial membrane respiratory chain NADH dehydrogenase (Complex I), that is believed not to be involved in catalysis. Complex I functions in the transfer of electrons from NADH to the respiratory chain. The immediate electron acceptor for the enzyme is believed to be ubiquinone. In Bos taurus (Bovine), this protein is NADH dehydrogenase [ubiquinone] iron-sulfur protein 5 (NDUFS5).